The primary structure comprises 324 residues: Galactosylgalactosylxylosylprotein 3-beta-glucuronosyltransferase 2 (324 aa).

At 1–2 the chain is on the cytoplasmic side; the sequence is MK. The chain crosses the membrane as a helical; Signal-anchor for type II membrane protein span at residues 3–23; that stretch reads SALCNRFFILLPWILIVIIML. At 24–324 the chain is on the lumenal side; sequence DVDPRRPAPQ…YHMDTVNIEV (301 aa). Positions 34-78 are disordered; the sequence is LTSRPYFSPHTVGCGGSRVPLRRSSPGRDAAEKRNESRPQLQPEP. A glycan (N-linked (GlcNAc...) asparagine) is linked at N68. D188 contacts Mn(2+). E274 serves as the catalytic Proton acceptor. N293 is a glycosylation site (N-linked (GlcNAc...) asparagine).

It belongs to the glycosyltransferase 43 family. As to quaternary structure, homodimer. Mn(2+) serves as cofactor. As to expression, expressed in the cerebral cortex, cerebellum and whole brain.

The protein localises to the golgi apparatus membrane. It catalyses the reaction 3-O-(beta-D-galactosyl-(1-&gt;3)-beta-D-galactosyl-(1-&gt;4)-beta-D-xylosyl)-L-seryl-[protein] + UDP-alpha-D-glucuronate = 3-O-(beta-D-GlcA-(1-&gt;3)-beta-D-Gal-(1-&gt;3)-beta-D-Gal-(1-&gt;4)-beta-D-Xyl)-L-seryl-[protein] + UDP + H(+). It functions in the pathway protein modification; protein glycosylation. Functionally, involved in the biosynthesis of L2/HNK-1 carbohydrate epitope on both glycolipids and glycoproteins. Substrates include asialo-orosomucoid (ASOR), paragloboside (lacto-N-neotetraosylceramide), Gal-beta-1,4-GlcNAc-beta-1,3-Gal-beta-1,4-Glc-pyridylamine and Gal-beta-1,3-GlcNAc-beta-1,3-Gal-beta-1,4-Glc-pyridylamine. The polypeptide is Galactosylgalactosylxylosylprotein 3-beta-glucuronosyltransferase 2 (B3gat2) (Rattus norvegicus (Rat)).